We begin with the raw amino-acid sequence, 316 residues long: MLEDSYLQLARTILEHGTYKDDRTGTGTYSVFGYQMRFDLSQGFPLLTTKKVPFGLIKSELLWFLHGDTNIQYLLQHHNHIWDEWAFKNWVTSADYDGPDMTNFEHRRLDDPDFAPIYQAQMQTFDDQILTDDAFAAKYGNLGDVYGAQWRHWQTRQGKTIDQIANVIEMIKTHPDSRRLIVSAWNPEDVPNMALPPCHTLFQFYVADGKLSCQLYQRSGDVFLGVPFNIASYALLTHLIAKETGLAVGEFVHTLGDAHIYTNHVEQVKTQLTRQPRPAPQLTLSGAHDSIFDYQMSDIKLSGYDPAPAIKAPVAI.

DUMP is bound by residues arginine 23 and 178–179; that span reads RR. The active-site Nucleophile is the cysteine 198. Residues 218-221, asparagine 229, and 259-261 contribute to the dUMP site; these read RSGD and HIY. Residue aspartate 221 participates in (6R)-5,10-methylene-5,6,7,8-tetrahydrofolate binding. Residue alanine 315 coordinates (6R)-5,10-methylene-5,6,7,8-tetrahydrofolate.

This sequence belongs to the thymidylate synthase family. Bacterial-type ThyA subfamily. As to quaternary structure, homodimer.

The protein resides in the cytoplasm. The catalysed reaction is dUMP + (6R)-5,10-methylene-5,6,7,8-tetrahydrofolate = 7,8-dihydrofolate + dTMP. The protein operates within pyrimidine metabolism; dTTP biosynthesis. Functionally, catalyzes the reductive methylation of 2'-deoxyuridine-5'-monophosphate (dUMP) to 2'-deoxythymidine-5'-monophosphate (dTMP) while utilizing 5,10-methylenetetrahydrofolate (mTHF) as the methyl donor and reductant in the reaction, yielding dihydrofolate (DHF) as a by-product. This enzymatic reaction provides an intracellular de novo source of dTMP, an essential precursor for DNA biosynthesis. The polypeptide is Thymidylate synthase (Lactiplantibacillus plantarum (strain ATCC BAA-793 / NCIMB 8826 / WCFS1) (Lactobacillus plantarum)).